Here is a 337-residue protein sequence, read N- to C-terminus: Phosphate acyltransferase (337 aa).

Belongs to the PlsX family. In terms of assembly, homodimer. Probably interacts with PlsY.

It is found in the cytoplasm. The catalysed reaction is a fatty acyl-[ACP] + phosphate = an acyl phosphate + holo-[ACP]. The protein operates within lipid metabolism; phospholipid metabolism. Functionally, catalyzes the reversible formation of acyl-phosphate (acyl-PO(4)) from acyl-[acyl-carrier-protein] (acyl-ACP). This enzyme utilizes acyl-ACP as fatty acyl donor, but not acyl-CoA. The protein is Phosphate acyltransferase of Listeria welshimeri serovar 6b (strain ATCC 35897 / DSM 20650 / CCUG 15529 / CIP 8149 / NCTC 11857 / SLCC 5334 / V8).